A 225-amino-acid chain; its full sequence is UPF0758 protein BCE_4545 (225 aa).

The region spanning 103 to 225 (SIRSPEDCAT…FVSLKEKGHI (123 aa)) is the MPN domain. Zn(2+) is bound by residues histidine 174, histidine 176, and aspartate 187. Residues 174 to 187 (HNHPSGDPAPSRED) carry the JAMM motif motif.

The protein belongs to the UPF0758 family.

In Bacillus cereus (strain ATCC 10987 / NRS 248), this protein is UPF0758 protein BCE_4545.